A 358-amino-acid chain; its full sequence is Methionine import ATP-binding protein MetN (358 aa).

The ABC transporter domain maps to 14–255 (VVFDAVSKRF…SRHETTRALL (242 aa)). Residue 52–59 (GRSGAGKS) coordinates ATP.

Belongs to the ABC transporter superfamily. Methionine importer (TC 3.A.1.24) family. As to quaternary structure, the complex is composed of two ATP-binding proteins (MetN), two transmembrane proteins (MetI) and a solute-binding protein (MetQ).

It is found in the cell inner membrane. It carries out the reaction L-methionine(out) + ATP + H2O = L-methionine(in) + ADP + phosphate + H(+). The catalysed reaction is D-methionine(out) + ATP + H2O = D-methionine(in) + ADP + phosphate + H(+). Part of the ABC transporter complex MetNIQ involved in methionine import. Responsible for energy coupling to the transport system. The protein is Methionine import ATP-binding protein MetN of Rhizobium meliloti (strain 1021) (Ensifer meliloti).